Here is a 53-residue protein sequence, read N- to C-terminus: Toxin CjTL7 (53 aa).

An N-terminal signal peptide occupies residues 1–22; the sequence is MMIKVLLLLSSALVLFTPEAEG. W51 carries the post-translational modification Tryptophan amide.

Contains 4 disulfide bonds.

Its subcellular location is the secreted. The protein localises to the nematocyst. Its function is as follows. In vivo, only causes a weak change in behavior in shrimps (C.multidentata) (slight twitching of the walking legs), but no lethal effect is observed. No activity is observed when injected into fly larvae (M.domestica). The protein is Toxin CjTL7 of Epiactis japonica (Sea anemone).